Here is a 931-residue protein sequence, read N- to C-terminus: Protocadherin gamma-A4 (931 aa).

The first 28 residues, 1–28 (MAAPPARPDHTRLLHICLLLGVLVEIRA), serve as a signal peptide directing secretion. Cadherin domains follow at residues 29–133 (EQIR…PPSF), 134–242 (GTEQ…APVF), 243–347 (TQPE…APEV), 348–452 (TVTS…PPTF), 453–567 (PHAS…YPTF), and 570–682 (DDST…KPSA). Over 29–692 (EQIRYSVFEE…DPDDSGLTLY (664 aa)) the chain is Extracellular. 2 N-linked (GlcNAc...) asparagine glycosylation sites follow: asparagine 419 and asparagine 545. A helical membrane pass occupies residues 693-713 (LVVSVAAVSCVFLAFVTVLLA). Residues 714–931 (LKLRRWHKSR…KKKSGKKEKK (218 aa)) are Cytoplasmic-facing. 2 disordered regions span residues 801 to 840 (KGDPNLQQAPPNTDWRFSQAQRPGTSGSQNGDDTGTWPNN) and 901 to 931 (ATLTNAAGKRDGKAPAGGNGNKKKSGKKEKK). The span at 805-840 (NLQQAPPNTDWRFSQAQRPGTSGSQNGDDTGTWPNN) shows a compositional bias: polar residues. Residues 921-931 (NKKKSGKKEKK) show a composition bias toward basic residues.

The protein resides in the cell membrane. Its function is as follows. Potential calcium-dependent cell-adhesion protein. May be involved in the establishment and maintenance of specific neuronal connections in the brain. The protein is Protocadherin gamma-A4 (PCDHGA4) of Pan troglodytes (Chimpanzee).